Reading from the N-terminus, the 141-residue chain is Small ribosomal subunit protein uS12 (141 aa).

Aspartate 89 carries the 3-methylthioaspartic acid modification. The interval 104 to 141 (ASGAVGPSNTNKLNRNVSRSKYGVKRPKAGAKPASKAK) is disordered. Over residues 110–122 (PSNTNKLNRNVSR) the composition is skewed to polar residues. Residues 125–141 (YGVKRPKAGAKPASKAK) show a composition bias toward basic residues.

It belongs to the universal ribosomal protein uS12 family. In terms of assembly, part of the 30S ribosomal subunit. Contacts proteins S8 and S17. May interact with IF1 in the 30S initiation complex.

Functionally, with S4 and S5 plays an important role in translational accuracy. In terms of biological role, interacts with and stabilizes bases of the 16S rRNA that are involved in tRNA selection in the A site and with the mRNA backbone. Located at the interface of the 30S and 50S subunits, it traverses the body of the 30S subunit contacting proteins on the other side and probably holding the rRNA structure together. The combined cluster of proteins S8, S12 and S17 appears to hold together the shoulder and platform of the 30S subunit. The chain is Small ribosomal subunit protein uS12 from Methylacidiphilum infernorum (isolate V4) (Methylokorus infernorum (strain V4)).